Here is a 128-residue protein sequence, read N- to C-terminus: MAPVKKLVAKGGKKKKQVLKFTLDCTHPVEDGIMDAANFEQFLQERIKVNGKAGNLGGGVVTIERSKSKITVTSEEPFSKRYLKYLTKKYLKKNNLRDWLRVVANSKESYELRYFQINQDEEEEEDED.

Threonine 62 carries the post-translational modification Phosphothreonine. Phosphoserine is present on serine 66. Lysine 69 carries the post-translational modification N6-succinyllysine.

The protein belongs to the eukaryotic ribosomal protein eL22 family. As to quaternary structure, component of the large ribosomal subunit.

The protein localises to the cytoplasm. In terms of biological role, component of the large ribosomal subunit. The ribosome is a large ribonucleoprotein complex responsible for the synthesis of proteins in the cell. The sequence is that of Large ribosomal subunit protein eL22 (Rpl22) from Rattus norvegicus (Rat).